The chain runs to 445 residues: Tubby-like F-box protein 8 (445 aa).

In terms of domain architecture, F-box spans 56 to 102 (ESRWASLPPELLRDVIRRLEASESTWPSRKDVVSCAAVCKAWREMCK).

Belongs to the TUB family. In terms of tissue distribution, ubiquitous.

The polypeptide is Tubby-like F-box protein 8 (TULP8) (Oryza sativa subsp. japonica (Rice)).